The primary structure comprises 361 residues: Phosphoserine aminotransferase (361 aa).

Arg-42 contributes to the L-glutamate binding site. Residues Ala-76 to Arg-77, Trp-102, Thr-153, Asp-173, and Gln-196 each bind pyridoxal 5'-phosphate. Lys-197 carries the post-translational modification N6-(pyridoxal phosphate)lysine. Asn-238–Thr-239 is a pyridoxal 5'-phosphate binding site.

This sequence belongs to the class-V pyridoxal-phosphate-dependent aminotransferase family. SerC subfamily. As to quaternary structure, homodimer. Pyridoxal 5'-phosphate serves as cofactor.

Its subcellular location is the cytoplasm. It carries out the reaction O-phospho-L-serine + 2-oxoglutarate = 3-phosphooxypyruvate + L-glutamate. It catalyses the reaction 4-(phosphooxy)-L-threonine + 2-oxoglutarate = (R)-3-hydroxy-2-oxo-4-phosphooxybutanoate + L-glutamate. The protein operates within amino-acid biosynthesis; L-serine biosynthesis; L-serine from 3-phospho-D-glycerate: step 2/3. It participates in cofactor biosynthesis; pyridoxine 5'-phosphate biosynthesis; pyridoxine 5'-phosphate from D-erythrose 4-phosphate: step 3/5. Its function is as follows. Catalyzes the reversible conversion of 3-phosphohydroxypyruvate to phosphoserine and of 3-hydroxy-2-oxo-4-phosphonooxybutanoate to phosphohydroxythreonine. This chain is Phosphoserine aminotransferase, found in Pectobacterium atrosepticum (strain SCRI 1043 / ATCC BAA-672) (Erwinia carotovora subsp. atroseptica).